Consider the following 201-residue polypeptide: Histidinol dehydrogenase (201 aa).

The protein belongs to the histidinol dehydrogenase family. Homodimer. Zn(2+) is required as a cofactor.

The enzyme catalyses L-histidinol + 2 NAD(+) + H2O = L-histidine + 2 NADH + 3 H(+). Its pathway is amino-acid biosynthesis; L-histidine biosynthesis; L-histidine from 5-phospho-alpha-D-ribose 1-diphosphate: step 9/9. Its function is as follows. Catalyzes the sequential NAD-dependent oxidations of L-histidinol to L-histidinaldehyde and then to L-histidine. This Buchnera aphidicola subsp. Schlechtendalia chinensis protein is Histidinol dehydrogenase (hisD).